We begin with the raw amino-acid sequence, 79 residues long: D-alanyl carrier protein (79 aa).

A Carrier domain is found at 1 to 77 (MDIKSEVLAI…KIVAGVTELC (77 aa)). Position 35 is an O-(pantetheine 4'-phosphoryl)serine (serine 35).

Belongs to the DltC family. In terms of processing, 4'-phosphopantetheine is transferred from CoA to a specific serine of apo-DCP.

The protein localises to the cytoplasm. It functions in the pathway cell wall biogenesis; lipoteichoic acid biosynthesis. Carrier protein involved in the D-alanylation of lipoteichoic acid (LTA). The loading of thioester-linked D-alanine onto DltC is catalyzed by D-alanine--D-alanyl carrier protein ligase DltA. The DltC-carried D-alanyl group is further transferred to cell membrane phosphatidylglycerol (PG) by forming an ester bond, probably catalyzed by DltD. D-alanylation of LTA plays an important role in modulating the properties of the cell wall in Gram-positive bacteria, influencing the net charge of the cell wall. The chain is D-alanyl carrier protein from Streptococcus agalactiae serotype Ia (strain ATCC 27591 / A909 / CDC SS700).